The primary structure comprises 291 residues: Acetyl-coenzyme A carboxylase carboxyl transferase subunit beta (291 aa).

In terms of domain architecture, CoA carboxyltransferase N-terminal spans 34–291; it reads MWTKCSNCNN…LILHGVNKYE (258 aa). 4 residues coordinate Zn(2+): C38, C41, C57, and C60. The C4-type zinc finger occupies 38–60; it reads CSNCNNMIYYEDLENNKYVCTKC.

Belongs to the AccD/PCCB family. As to quaternary structure, acetyl-CoA carboxylase is a heterohexamer composed of biotin carboxyl carrier protein (AccB), biotin carboxylase (AccC) and two subunits each of ACCase subunit alpha (AccA) and ACCase subunit beta (AccD). The cofactor is Zn(2+).

It localises to the cytoplasm. It catalyses the reaction N(6)-carboxybiotinyl-L-lysyl-[protein] + acetyl-CoA = N(6)-biotinyl-L-lysyl-[protein] + malonyl-CoA. The protein operates within lipid metabolism; malonyl-CoA biosynthesis; malonyl-CoA from acetyl-CoA: step 1/1. Component of the acetyl coenzyme A carboxylase (ACC) complex. Biotin carboxylase (BC) catalyzes the carboxylation of biotin on its carrier protein (BCCP) and then the CO(2) group is transferred by the transcarboxylase to acetyl-CoA to form malonyl-CoA. This is Acetyl-coenzyme A carboxylase carboxyl transferase subunit beta from Clostridium botulinum (strain Eklund 17B / Type B).